A 407-amino-acid polypeptide reads, in one-letter code: Carbamoyl phosphate synthase small chain (407 aa).

The interval 1–205 is CPSase; that stretch reads MTETTSKTAP…LADGYGEQDT (205 aa). Residues Ser60, Gly257, and Gly259 each contribute to the L-glutamine site. A Glutamine amidotransferase type-1 domain is found at 209-397; that stretch reads HVVALDFGVK…INLIREKKGE (189 aa). Residue Cys286 is the Nucleophile of the active site. L-glutamine is bound by residues Leu287, Gln290, Asn328, Gly330, and Phe331. Active-site residues include His370 and Glu372.

Belongs to the CarA family. As to quaternary structure, composed of two chains; the small (or glutamine) chain promotes the hydrolysis of glutamine to ammonia, which is used by the large (or ammonia) chain to synthesize carbamoyl phosphate. Tetramer of heterodimers (alpha,beta)4.

It carries out the reaction hydrogencarbonate + L-glutamine + 2 ATP + H2O = carbamoyl phosphate + L-glutamate + 2 ADP + phosphate + 2 H(+). It catalyses the reaction L-glutamine + H2O = L-glutamate + NH4(+). Its pathway is amino-acid biosynthesis; L-arginine biosynthesis; carbamoyl phosphate from bicarbonate: step 1/1. It participates in pyrimidine metabolism; UMP biosynthesis via de novo pathway; (S)-dihydroorotate from bicarbonate: step 1/3. Its function is as follows. Small subunit of the glutamine-dependent carbamoyl phosphate synthetase (CPSase). CPSase catalyzes the formation of carbamoyl phosphate from the ammonia moiety of glutamine, carbonate, and phosphate donated by ATP, constituting the first step of 2 biosynthetic pathways, one leading to arginine and/or urea and the other to pyrimidine nucleotides. The small subunit (glutamine amidotransferase) binds and cleaves glutamine to supply the large subunit with the substrate ammonia. In Brucella anthropi (strain ATCC 49188 / DSM 6882 / CCUG 24695 / JCM 21032 / LMG 3331 / NBRC 15819 / NCTC 12168 / Alc 37) (Ochrobactrum anthropi), this protein is Carbamoyl phosphate synthase small chain.